The following is a 395-amino-acid chain: Flap endonuclease 1 (395 aa).

The N-domain stretch occupies residues 1–104; sequence MGIKHLYQII…GELAKRFMRK (104 aa). Asp-34 is a binding site for Mg(2+). Residues Arg-47 and Arg-70 each contribute to the DNA site. Residues Asp-86, Glu-158, Glu-160, Asp-179, and Asp-181 each coordinate Mg(2+). The interval 122 to 253 is I-domain; that stretch reads EVEKFSRRTV…NTALKLIRDH (132 aa). Glu-158 is a DNA binding site. DNA is bound by residues Gly-231 and Asp-233. Mg(2+) is bound at residue Asp-233. An interaction with PCNA region spans residues 341 to 349; sequence QQSRLEGFF. Residues 360–389 are compositionally biased toward basic and acidic residues; that stretch reads AVLKRKHEEKLELQKKKKKEDAKAKKEAKS. The disordered stretch occupies residues 360–395; it reads AVLKRKHEEKLELQKKKKKEDAKAKKEAKSKPRGTT.

Belongs to the XPG/RAD2 endonuclease family. FEN1 subfamily. Interacts with PCNA. Three molecules of FEN1 bind to one PCNA trimer with each molecule binding to one PCNA monomer. PCNA stimulates the nuclease activity without altering cleavage specificity. The cofactor is Mg(2+). Phosphorylated. Phosphorylation upon DNA damage induces relocalization to the nuclear plasma.

It localises to the nucleus. Its subcellular location is the nucleolus. The protein localises to the nucleoplasm. It is found in the mitochondrion. Its function is as follows. Structure-specific nuclease with 5'-flap endonuclease and 5'-3' exonuclease activities involved in DNA replication and repair. During DNA replication, cleaves the 5'-overhanging flap structure that is generated by displacement synthesis when DNA polymerase encounters the 5'-end of a downstream Okazaki fragment. It enters the flap from the 5'-end and then tracks to cleave the flap base, leaving a nick for ligation. Also involved in the long patch base excision repair (LP-BER) pathway, by cleaving within the apurinic/apyrimidinic (AP) site-terminated flap. Acts as a genome stabilization factor that prevents flaps from equilibrating into structures that lead to duplications and deletions. Also possesses 5'-3' exonuclease activity on nicked or gapped double-stranded DNA, and exhibits RNase H activity. Also involved in replication and repair of rDNA and in repairing mitochondrial DNA. This chain is Flap endonuclease 1, found in Ajellomyces capsulatus (strain NAm1 / WU24) (Darling's disease fungus).